Here is a 1556-residue protein sequence, read N- to C-terminus: Pentafunctional AROM polypeptide (1556 aa).

The tract at residues M1–D387 is 3-dehydroquinate synthase. NAD(+)-binding positions include D46 to N48, E84 to K87, G115 to V117, and D120. R131 is a 7-phospho-2-dehydro-3-deoxy-D-arabino-heptonate binding site. NAD(+) is bound at residue T140–T141. 7-phospho-2-dehydro-3-deoxy-D-arabino-heptonate is bound by residues D147 and K153. Residue K162 coordinates NAD(+). N163 contributes to the 7-phospho-2-dehydro-3-deoxy-D-arabino-heptonate binding site. NAD(+)-binding positions include F180–T183 and N191. E195 is a Zn(2+) binding site. 7-phospho-2-dehydro-3-deoxy-D-arabino-heptonate is bound by residues E195–K198 and K253. The active-site Proton acceptor; for 3-dehydroquinate synthase activity is E263. Residues R267–N271 and H274 each bind 7-phospho-2-dehydro-3-deoxy-D-arabino-heptonate. Residue H274 coordinates Zn(2+). The Proton acceptor; for 3-dehydroquinate synthase activity role is filled by H278. 2 residues coordinate 7-phospho-2-dehydro-3-deoxy-D-arabino-heptonate: H290 and K359. H290 lines the Zn(2+) pocket. Residues V400 to V837 are EPSP synthase. The active-site For EPSP synthase activity is the C819. Positions P858 to S1049 are shikimate kinase. G864–T871 contributes to the ATP binding site. Positions L1050–E1266 are 3-dehydroquinase. The active-site Proton acceptor; for 3-dehydroquinate dehydratase activity is H1171. K1200 functions as the Schiff-base intermediate with substrate; for 3-dehydroquinate dehydratase activity in the catalytic mechanism. The segment at K1279–N1556 is shikimate dehydrogenase.

It in the N-terminal section; belongs to the sugar phosphate cyclases superfamily. Dehydroquinate synthase family. In the 2nd section; belongs to the EPSP synthase family. This sequence in the 3rd section; belongs to the shikimate kinase family. The protein in the 4th section; belongs to the type-I 3-dehydroquinase family. It in the C-terminal section; belongs to the shikimate dehydrogenase family. As to quaternary structure, homodimer. The cofactor is Zn(2+).

It localises to the cytoplasm. It catalyses the reaction 7-phospho-2-dehydro-3-deoxy-D-arabino-heptonate = 3-dehydroquinate + phosphate. The catalysed reaction is 3-dehydroquinate = 3-dehydroshikimate + H2O. The enzyme catalyses shikimate + NADP(+) = 3-dehydroshikimate + NADPH + H(+). It carries out the reaction shikimate + ATP = 3-phosphoshikimate + ADP + H(+). It catalyses the reaction 3-phosphoshikimate + phosphoenolpyruvate = 5-O-(1-carboxyvinyl)-3-phosphoshikimate + phosphate. It participates in metabolic intermediate biosynthesis; chorismate biosynthesis; chorismate from D-erythrose 4-phosphate and phosphoenolpyruvate: step 2/7. The protein operates within metabolic intermediate biosynthesis; chorismate biosynthesis; chorismate from D-erythrose 4-phosphate and phosphoenolpyruvate: step 3/7. It functions in the pathway metabolic intermediate biosynthesis; chorismate biosynthesis; chorismate from D-erythrose 4-phosphate and phosphoenolpyruvate: step 4/7. Its pathway is metabolic intermediate biosynthesis; chorismate biosynthesis; chorismate from D-erythrose 4-phosphate and phosphoenolpyruvate: step 5/7. It participates in metabolic intermediate biosynthesis; chorismate biosynthesis; chorismate from D-erythrose 4-phosphate and phosphoenolpyruvate: step 6/7. The AROM polypeptide catalyzes 5 consecutive enzymatic reactions in prechorismate polyaromatic amino acid biosynthesis. This Yarrowia lipolytica (strain CLIB 122 / E 150) (Yeast) protein is Pentafunctional AROM polypeptide.